A 274-amino-acid chain; its full sequence is Long chain fatty acid elongase 5 (274 aa).

Residues Met-1–Glu-23 lie on the Extracellular side of the membrane. The chain crosses the membrane as a helical span at residues Gly-24–Met-44. The Cytoplasmic segment spans residues Lys-45–Gly-61. A helical membrane pass occupies residues Ile-62–Ile-82. Over Arg-83–Tyr-105 the chain is Extracellular. The helical transmembrane segment at Trp-106–Leu-126 threads the bilayer. Over Arg-127 to Arg-129 the chain is Cytoplasmic. Residues Pro-130–Tyr-150 form a helical membrane-spanning segment. The Extracellular segment spans residues His-151–His-156. Residues Met-157–Leu-177 traverse the membrane as a helical segment. Residues Lys-178–Ser-187 lie on the Cytoplasmic side of the membrane. A helical transmembrane segment spans residues Val-188–Val-208. Residues His-209 to Arg-227 lie on the Extracellular side of the membrane. A helical membrane pass occupies residues Gly-228–Lys-248. The Cytoplasmic segment spans residues Glu-249–Asn-274.

Belongs to the ELO family. In terms of tissue distribution, expressed in the gut and unidentified head cells.

It localises to the membrane. The catalysed reaction is 11-methyldodecanoyl-CoA + malonyl-CoA + H(+) = 3-oxoisopentadecanoyl-CoA + CO2 + CoA. The enzyme catalyses isopentadecanoyl-CoA + malonyl-CoA + H(+) = 3-oxoisoheptadecanoyl-CoA + CO2 + CoA. It participates in lipid metabolism; fatty acid biosynthesis. Its function is as follows. Catalyzes the first and rate-limiting reaction of the four reactions that constitute the long-chain fatty acids elongation cycle. Uses malonyl-CoA to add 2 carbons per cycle to the chain of long-chain fatty acids. Condensing enzyme required for the formation of isopentadecanoate (C15iso) and isoheptadecanoate (C17iso), both play critical roles in animal development and growth. The protein is Long chain fatty acid elongase 5 of Caenorhabditis elegans.